Reading from the N-terminus, the 259-residue chain is MAIHLVIIDALNLIRRVHSAQPNQDDIQAVITTTTRTINKILKETEPTHIIAVFDHHLQDRGWRAEILPQYKEDRKPMPEALQKGMDDIQEAWWKLGIDSLLSDGDEADDLVATLANKVAMHNEQVTIISTDKGYCQLLSPTLRIRDYFQHRWLDAPFVEKEFGLKPEQLADYWGLAGISSSKITGIPGVGPKAALEILTQFPTIEAANESEDLPKKYRKKFDEHYETAILCRQVAGLRTDIELGFNLQDIRYEKGTRD.

Position 109 (Asp109) interacts with Mg(2+). Residues 165–255 (LKPEQLADYW…FNLQDIRYEK (91 aa)) enclose the 5'-3' exonuclease domain. The K(+) site is built by Leu176, Ala177, Ile187, and Val190. The segment at 189–194 (GVGPKA) is interaction with DNA.

Belongs to the Xni family. Mg(2+) serves as cofactor. It depends on K(+) as a cofactor.

Has flap endonuclease activity. During DNA replication, flap endonucleases cleave the 5'-overhanging flap structure that is generated by displacement synthesis when DNA polymerase encounters the 5'-end of a downstream Okazaki fragment. The polypeptide is Flap endonuclease Xni (Aliivibrio fischeri (strain ATCC 700601 / ES114) (Vibrio fischeri)).